A 232-amino-acid chain; its full sequence is MSQYQNQYGAQTGMTDEYGNPVNQVDQYGNPISGGGGLTGEAGRQHYGTTGGATGQGHGHGQQHRGVDQTTGYGTHTGGVGGYGTKPEYGSTNTGSGYGTGTGYGGSGTNPDYGSTNTGSGYGTGTGYGGSGTTEYVREEHHGDKKGVMDKIKEKIPGTEQSRTNTDGTGYGSTGQGYVREQQHGTGYGSTGQGYVREQQDVHHGDEQHGEKKGIMEKIKEKLPGTGACTGH.

The segment covering 1-14 (MSQYQNQYGAQTGM) has biased composition (polar residues). 2 disordered regions span residues 1–66 (MSQY…QHRG) and 140–232 (EHHG…CTGH). Gly residues predominate over residues 49-60 (TTGGATGQGHGH). The span at 140–157 (EHHGDKKGVMDKIKEKIP) shows a compositional bias: basic and acidic residues. A compositionally biased stretch (polar residues) spans 159–168 (TEQSRTNTDG). A compositionally biased stretch (basic and acidic residues) spans 198-223 (EQQDVHHGDEQHGEKKGIMEKIKEKL).

The protein belongs to the plant dehydrin family.

The sequence is that of Dehydrin DHN3 (DHN3) from Pisum sativum (Garden pea).